The following is a 204-amino-acid chain: MNFLNFSILIFAYLLGSINSAIIVCYIFRLPSPRSVGSGNPGTTNVLRIGGKVPAAITLIFDILKGLVPVVIAKVLTGNEFITACTALYAILGHIFPIFFGFKGGKGIATLVGTLFGFSWILGLIFVITWLCVAIITRYSSLSALVATFIASFSVIFTSDLQVAAPFLIIAIIILVKHKGNIQRLISGQESKIGDKAKAKNDSN.

5 helical membrane passes run 8–28, 53–73, 81–101, 116–136, and 155–175; these read ILIFAYLLGSINSAIIVCYIF, VPAAITLIFDILKGLVPVVIA, FITACTALYAILGHIFPIFFG, FGFSWILGLIFVITWLCVAII, and VIFTSDLQVAAPFLIIAIIIL.

The protein belongs to the PlsY family. As to quaternary structure, probably interacts with PlsX.

It is found in the cell inner membrane. The catalysed reaction is an acyl phosphate + sn-glycerol 3-phosphate = a 1-acyl-sn-glycero-3-phosphate + phosphate. The protein operates within lipid metabolism; phospholipid metabolism. In terms of biological role, catalyzes the transfer of an acyl group from acyl-phosphate (acyl-PO(4)) to glycerol-3-phosphate (G3P) to form lysophosphatidic acid (LPA). This enzyme utilizes acyl-phosphate as fatty acyl donor, but not acyl-CoA or acyl-ACP. The sequence is that of Glycerol-3-phosphate acyltransferase from Francisella tularensis subsp. mediasiatica (strain FSC147).